The sequence spans 315 residues: Protein FRA10AC1 homolog (315 aa).

Met-1 is modified (N-acetylmethionine). The tract at residues 1 to 28 (MHGHGGYDSDFSDDEQGGGSSKKRKKTV) is disordered. Phosphoserine is present on residues Ser-9 and Ser-12. An N6-acetyllysine modification is found at Lys-36. Over residues 225–235 (KEIKSTKKKSK) the composition is skewed to basic residues. The tract at residues 225–308 (KEIKSTKKKS…EKSQEEEFDD (84 aa)) is disordered. Basic and acidic residues-rich tracts occupy residues 236–245 (TTPECDESPR) and 255–278 (EASK…NRNA). 2 positions are modified to phosphoserine: Ser-283 and Ser-285.

In terms of assembly, interacts with ESS2.

It is found in the nucleus. Its function is as follows. May be involved in pre-mRNA splicing. The chain is Protein FRA10AC1 homolog (Fra10ac1) from Mus musculus (Mouse).